Reading from the N-terminus, the 268-residue chain is 4-diphosphocytidyl-2-C-methyl-D-erythritol kinase (268 aa).

Lys-10 is a catalytic residue. 101-111 (PTQAGLGGGST) is an ATP binding site. The active site involves Asp-143.

The protein belongs to the GHMP kinase family. IspE subfamily.

It catalyses the reaction 4-CDP-2-C-methyl-D-erythritol + ATP = 4-CDP-2-C-methyl-D-erythritol 2-phosphate + ADP + H(+). Its pathway is isoprenoid biosynthesis; isopentenyl diphosphate biosynthesis via DXP pathway; isopentenyl diphosphate from 1-deoxy-D-xylulose 5-phosphate: step 3/6. Catalyzes the phosphorylation of the position 2 hydroxy group of 4-diphosphocytidyl-2C-methyl-D-erythritol. The protein is 4-diphosphocytidyl-2-C-methyl-D-erythritol kinase of Helicobacter acinonychis (strain Sheeba).